Reading from the N-terminus, the 257-residue chain is UPF0246 protein RSc2009 (257 aa).

Belongs to the UPF0246 family.

This chain is UPF0246 protein RSc2009, found in Ralstonia nicotianae (strain ATCC BAA-1114 / GMI1000) (Ralstonia solanacearum).